We begin with the raw amino-acid sequence, 456 residues long: tRNA modification GTPase MnmE (456 aa).

Positions 29, 87, and 126 each coordinate (6S)-5-formyl-5,6,7,8-tetrahydrofolate. One can recognise a TrmE-type G domain in the interval 222 to 380; sequence GYKLAIIGRP…LLSLLASWLD (159 aa). Asn232 contacts K(+). GTP-binding positions include 232–237, 251–257, and 276–279; these read NVGKSS, SDIPGTT, and DTAG. Position 236 (Ser236) interacts with Mg(2+). Ser251, Ile253, and Thr256 together coordinate K(+). Residue Thr257 coordinates Mg(2+). A (6S)-5-formyl-5,6,7,8-tetrahydrofolate-binding site is contributed by Lys456.

The protein belongs to the TRAFAC class TrmE-Era-EngA-EngB-Septin-like GTPase superfamily. TrmE GTPase family. As to quaternary structure, homodimer. Heterotetramer of two MnmE and two MnmG subunits. It depends on K(+) as a cofactor.

The protein resides in the cytoplasm. In terms of biological role, exhibits a very high intrinsic GTPase hydrolysis rate. Involved in the addition of a carboxymethylaminomethyl (cmnm) group at the wobble position (U34) of certain tRNAs, forming tRNA-cmnm(5)s(2)U34. The sequence is that of tRNA modification GTPase MnmE from Wolinella succinogenes (strain ATCC 29543 / DSM 1740 / CCUG 13145 / JCM 31913 / LMG 7466 / NCTC 11488 / FDC 602W) (Vibrio succinogenes).